Consider the following 239-residue polypeptide: Peroxygenase (239 aa).

The residue at position 2 (G2) is an N-acetylglycine. The EF-hand domain maps to 60–95 (HNMSVLQQRAAFFDRNNDGIVYPWETYQGFRAVGFG). D73, N75, D77, and E84 together coordinate Ca(2+). The Proline-knot motif lies at 116-125 (PSWIPSPVLS).

It belongs to the caleosin family. As to quaternary structure, homodimer. The cofactor is heme b. Ca(2+) serves as cofactor. Expressed in pollen (at protein level). Not expressed in leaf, root, stem, tepal, ovary, style, filament or stigma (at protein level).

Its subcellular location is the lipid droplet. It is found in the microsome membrane. It catalyses the reaction RH + ROOH = ROH + ROH.. Its function is as follows. Calcium-binding peroxygenase involved in the degradation of storage lipid in oil bodies. This Lilium longiflorum (Trumpet lily) protein is Peroxygenase.